The sequence spans 451 residues: Gamma-aminobutyric acid receptor subunit alpha-2 (451 aa).

The N-terminal stretch at M1–A28 is a signal peptide. Over N29–K249 the chain is Extracellular. The N-linked (GlcNAc...) asparagine glycan is linked to N38. 4-aminobutanoate is bound at residue R94. The N-linked (GlcNAc...) asparagine glycan is linked to N138. A 4-aminobutanoate-binding site is contributed by T157. A disulfide bridge connects residues C166 and C180. Residues I250–V270 form a helical membrane-spanning segment. Residues S271–P280 lie on the Cytoplasmic side of the membrane. Residues A281–A300 traverse the membrane as a helical segment. Over R301 to T311 the chain is Extracellular. A helical transmembrane segment spans residues A312 to A332. Topologically, residues T333–M420 are cytoplasmic. Residues S421 to L441 form a helical membrane-spanning segment. At N442–P451 the chain is on the extracellular side.

This sequence belongs to the ligand-gated ion channel (TC 1.A.9) family. Gamma-aminobutyric acid receptor (TC 1.A.9.5) subfamily. GABRA2 sub-subfamily. As to quaternary structure, heteropentamer, formed by a combination of alpha (GABRA1-6), beta (GABRB1-3), gamma (GABRG1-3), delta (GABRD), epsilon (GABRE), rho (GABRR1-3), pi (GABRP) and theta (GABRQ) subunits, each subunit exhibiting distinct physiological and pharmacological properties. Interacts with UBQLN1. Interacts with KIF21B. Interacts with LHFPL4. Interacts with SHISA7; interaction leads to the regulation of GABA(A) receptor trafficking, channel deactivation kinetics and pharmacology. In terms of processing, glycosylated.

The protein localises to the postsynaptic cell membrane. It is found in the cell membrane. Its subcellular location is the cytoplasmic vesicle membrane. The protein resides in the cell projection. It localises to the dendrite. It catalyses the reaction chloride(in) = chloride(out). Activated by pentobarbital. Inhibited by the antagonist bicuculline. Alpha subunit of the heteropentameric ligand-gated chloride channel gated by gamma-aminobutyric acid (GABA), a major inhibitory neurotransmitter in the brain. GABA-gated chloride channels, also named GABA(A) receptors (GABAAR), consist of five subunits arranged around a central pore and contain GABA active binding site(s) located at the alpha and beta subunit interface(s). When activated by GABA, GABAARs selectively allow the flow of chloride anions across the cell membrane down their electrochemical gradient. Chloride influx into the postsynaptic neuron following GABAAR opening decreases the neuron ability to generate a new action potential, thereby reducing nerve transmission. The alpha-2 subunit exhibits synaptogenic activity together with beta-2 and very little to no activity together with beta-3, the gamma-2 subunit being necessary but not sufficient to induce rapid synaptic contacts formation. This is Gamma-aminobutyric acid receptor subunit alpha-2 (GABRA2) from Pongo abelii (Sumatran orangutan).